Here is an 873-residue protein sequence, read N- to C-terminus: Alanine--tRNA ligase (873 aa).

Residues His563, His567, Cys665, and His669 each coordinate Zn(2+).

The protein belongs to the class-II aminoacyl-tRNA synthetase family. Zn(2+) serves as cofactor.

It is found in the cytoplasm. The enzyme catalyses tRNA(Ala) + L-alanine + ATP = L-alanyl-tRNA(Ala) + AMP + diphosphate. In terms of biological role, catalyzes the attachment of alanine to tRNA(Ala) in a two-step reaction: alanine is first activated by ATP to form Ala-AMP and then transferred to the acceptor end of tRNA(Ala). Also edits incorrectly charged Ser-tRNA(Ala) and Gly-tRNA(Ala) via its editing domain. The sequence is that of Alanine--tRNA ligase from Parabacteroides distasonis (strain ATCC 8503 / DSM 20701 / CIP 104284 / JCM 5825 / NCTC 11152).